Here is a 373-residue protein sequence, read N- to C-terminus: Alanine racemase (373 aa).

Lysine 40 serves as the catalytic Proton acceptor; specific for D-alanine. Lysine 40 carries the post-translational modification N6-(pyridoxal phosphate)lysine. Arginine 140 is a substrate binding site. Tyrosine 268 functions as the Proton acceptor; specific for L-alanine in the catalytic mechanism. Methionine 315 is a binding site for substrate.

Belongs to the alanine racemase family. Requires pyridoxal 5'-phosphate as cofactor.

It carries out the reaction L-alanine = D-alanine. It participates in amino-acid biosynthesis; D-alanine biosynthesis; D-alanine from L-alanine: step 1/1. Its function is as follows. Catalyzes the interconversion of L-alanine and D-alanine. May also act on other amino acids. The protein is Alanine racemase (alr) of Limosilactobacillus fermentum (strain NBRC 3956 / LMG 18251) (Lactobacillus fermentum).